Reading from the N-terminus, the 184-residue chain is SsrA-binding protein (184 aa).

Residues 1–11 (MAAKKSTPTDS) show a composition bias toward polar residues. Residues 1–31 (MAAKKSTPTDSGKSKGKKNKAQKGAGQKGAG) are disordered.

Belongs to the SmpB family.

Its subcellular location is the cytoplasm. In terms of biological role, required for rescue of stalled ribosomes mediated by trans-translation. Binds to transfer-messenger RNA (tmRNA), required for stable association of tmRNA with ribosomes. tmRNA and SmpB together mimic tRNA shape, replacing the anticodon stem-loop with SmpB. tmRNA is encoded by the ssrA gene; the 2 termini fold to resemble tRNA(Ala) and it encodes a 'tag peptide', a short internal open reading frame. During trans-translation Ala-aminoacylated tmRNA acts like a tRNA, entering the A-site of stalled ribosomes, displacing the stalled mRNA. The ribosome then switches to translate the ORF on the tmRNA; the nascent peptide is terminated with the 'tag peptide' encoded by the tmRNA and targeted for degradation. The ribosome is freed to recommence translation, which seems to be the essential function of trans-translation. The polypeptide is SsrA-binding protein (Corynebacterium jeikeium (strain K411)).